The sequence spans 358 residues: Putative UDP-kanosamine synthase oxidoreductase subunit (358 aa).

In terms of assembly, interacts with RifK.

The enzyme catalyses UDP-alpha-D-glucose + NAD(+) = UDP-3-oxo-alpha-D-glucose + NADH + H(+). It functions in the pathway antibiotic biosynthesis; rifamycin B biosynthesis. In a complex with RifK, RifL may catalyze the oxidation of UDP-glucose to UDP-3-keto-D-glucose, which would then be used by RifK to produce UDP-kanosamine. Is not able to use dTDP-glucose as substrate. This is Putative UDP-kanosamine synthase oxidoreductase subunit (rifL) from Amycolatopsis mediterranei (strain S699) (Nocardia mediterranei).